A 91-amino-acid polypeptide reads, in one-letter code: Probable Fe(2+)-trafficking protein (91 aa).

It belongs to the Fe(2+)-trafficking protein family.

Could be a mediator in iron transactions between iron acquisition and iron-requiring processes, such as synthesis and/or repair of Fe-S clusters in biosynthetic enzymes. The chain is Probable Fe(2+)-trafficking protein from Shewanella denitrificans (strain OS217 / ATCC BAA-1090 / DSM 15013).